Consider the following 289-residue polypeptide: Heme oxygenase 1, chloroplastic (289 aa).

The N-terminal 64 residues, 1–64, are a transit peptide targeting the chloroplast; sequence MAPAAASLTA…SASSSRRMVV (64 aa). His96 is a binding site for heme b.

It belongs to the heme oxygenase family.

Its subcellular location is the plastid. It is found in the chloroplast. The enzyme catalyses heme b + 3 reduced [NADPH--hemoprotein reductase] + 3 O2 = biliverdin IXalpha + CO + Fe(2+) + 3 oxidized [NADPH--hemoprotein reductase] + 3 H2O + H(+). Its function is as follows. Catalyzes the opening of the heme ring to form the open-chain tetrapyrrole biliverdin IX with the release of iron and carbon monoxide (CO). Is a key enzyme in the synthesis of the chromophore of the phytochrome family of plant photoreceptors. Essential for photoperiod response and repression of flowering through cytochromes that inhibit flowering by affecting both HD1 and EHD1 flowering pathways. In Oryza sativa subsp. japonica (Rice), this protein is Heme oxygenase 1, chloroplastic (HO1).